Reading from the N-terminus, the 330-residue chain is Polygalacturonase inhibitor 2 (330 aa).

Positions 1–21 are cleaved as a signal peptide; the sequence is MDKTMTLFLLLSTLLLTTSLA. Intrachain disulfides connect C25–C55 and C56–C63. LRR repeat units follow at residues 69–93, 94–117, 118–141, 142–166, 167–192, 194–215, 217–237, 238–260, 261–285, and 287–308; these read NHRV…VGDL, PYLT…TIAK, LKNL…FLSQ, LKNL…LSSL, RKLE…TFSG, VPSL…LGNP, FYRI…LFGA, KKTT…KVKL, AKTL…WSKA, and FQLL…EYIQ. 3 N-linked (GlcNAc...) asparagine glycosylation sites follow: N106, N120, and N130. N291 is a glycosylation site (N-linked (GlcNAc...) asparagine). Intrachain disulfides connect C298–C320 and C322–C329.

The protein belongs to the polygalacturonase-inhibiting protein family.

It is found in the secreted. The protein resides in the cell wall. It localises to the membrane. Its function is as follows. Inhibitor of fungal polygalacturonase. It is an important factor for plant resistance to phytopathogenic fungi. This chain is Polygalacturonase inhibitor 2 (PGIP2), found in Arabidopsis thaliana (Mouse-ear cress).